We begin with the raw amino-acid sequence, 530 residues long: Glutamate--cysteine ligase (530 aa).

This sequence belongs to the glutamate--cysteine ligase type 1 family. Type 1 subfamily.

It carries out the reaction L-cysteine + L-glutamate + ATP = gamma-L-glutamyl-L-cysteine + ADP + phosphate + H(+). Its pathway is sulfur metabolism; glutathione biosynthesis; glutathione from L-cysteine and L-glutamate: step 1/2. This chain is Glutamate--cysteine ligase, found in Pseudomonas entomophila (strain L48).